Reading from the N-terminus, the 127-residue chain is Aspartate 1-decarboxylase (127 aa).

Serine 25 acts as the Schiff-base intermediate with substrate; via pyruvic acid in catalysis. At serine 25 the chain carries Pyruvic acid (Ser). Residue threonine 57 participates in substrate binding. Tyrosine 58 (proton donor) is an active-site residue. 73 to 75 is a binding site for substrate; sequence GAA.

The protein belongs to the PanD family. Heterooctamer of four alpha and four beta subunits. The cofactor is pyruvate. In terms of processing, is synthesized initially as an inactive proenzyme, which is activated by self-cleavage at a specific serine bond to produce a beta-subunit with a hydroxyl group at its C-terminus and an alpha-subunit with a pyruvoyl group at its N-terminus.

It localises to the cytoplasm. It catalyses the reaction L-aspartate + H(+) = beta-alanine + CO2. It participates in cofactor biosynthesis; (R)-pantothenate biosynthesis; beta-alanine from L-aspartate: step 1/1. Its function is as follows. Catalyzes the pyruvoyl-dependent decarboxylation of aspartate to produce beta-alanine. In Bacillus velezensis (strain DSM 23117 / BGSC 10A6 / LMG 26770 / FZB42) (Bacillus amyloliquefaciens subsp. plantarum), this protein is Aspartate 1-decarboxylase.